The following is a 72-amino-acid chain: Protein kish-A (72 aa).

The N-terminal stretch at 1–26 is a signal peptide; sequence MSAIFNFQSLLTVILLLICTCAYIRS. The Extracellular segment spans residues 27 to 53; that stretch reads LAPSLLDKNKTGLLGIFWKCARIGERK. N-linked (GlcNAc...) asparagine glycosylation occurs at N35. Residues 54 to 71 traverse the membrane as a helical segment; it reads SPYVAVCCVVMAFSILFV. Position 72 (Q72) is a topological domain, cytoplasmic.

The protein belongs to the KISH family.

It is found in the golgi apparatus membrane. Its function is as follows. Involved in the early part of the secretory pathway. This chain is Protein kish-A (TMEM167A), found in Gallus gallus (Chicken).